A 125-amino-acid polypeptide reads, in one-letter code: Small ribosomal subunit protein uS13 (125 aa).

Positions 92–125 (RRSLPARGQRTRTNARTRKGKRKTVAGKKKAGKK) are disordered.

The protein belongs to the universal ribosomal protein uS13 family. Part of the 30S ribosomal subunit. Forms a loose heterodimer with protein S19. Forms two bridges to the 50S subunit in the 70S ribosome.

Its function is as follows. Located at the top of the head of the 30S subunit, it contacts several helices of the 16S rRNA. In the 70S ribosome it contacts the 23S rRNA (bridge B1a) and protein L5 of the 50S subunit (bridge B1b), connecting the 2 subunits; these bridges are implicated in subunit movement. Contacts the tRNAs in the A and P-sites. This Chlorobaculum parvum (strain DSM 263 / NCIMB 8327) (Chlorobium vibrioforme subsp. thiosulfatophilum) protein is Small ribosomal subunit protein uS13.